A 525-amino-acid chain; its full sequence is GMP synthase [glutamine-hydrolyzing] (525 aa).

The Glutamine amidotransferase type-1 domain maps to 8-207 (KILILDFGSQ…ALDICGCAAN (200 aa)). Residue cysteine 85 is the Nucleophile of the active site. Catalysis depends on residues histidine 181 and glutamate 183. Residues 208–400 (WKPSSIIEDA…LGLPYNMLYR (193 aa)) form the GMPS ATP-PPase domain. 235-241 (SGGVDSS) contacts ATP.

As to quaternary structure, homodimer.

The enzyme catalyses XMP + L-glutamine + ATP + H2O = GMP + L-glutamate + AMP + diphosphate + 2 H(+). Its pathway is purine metabolism; GMP biosynthesis; GMP from XMP (L-Gln route): step 1/1. Functionally, catalyzes the synthesis of GMP from XMP. The sequence is that of GMP synthase [glutamine-hydrolyzing] from Shewanella baltica (strain OS223).